Reading from the N-terminus, the 296-residue chain is GTPase Era (296 aa).

Residues 7–174 form the Era-type G domain; the sequence is KCSMSAIVGT…VDYLCETSPY (168 aa). The segment at 15-22 is G1; the sequence is GTTNAGKS. 15–22 contacts GTP; the sequence is GTTNAGKS. A G2 region spans residues 41–45; that stretch reads QTTRV. A G3 region spans residues 62–65; sequence DTPG. Residues 62–66 and 124–127 contribute to the GTP site; these read DTPGI and NKID. Positions 124-127 are G4; the sequence is NKID. Residues 153–155 are G5; that stretch reads ISA. The region spanning 205–282 is the KH type-2 domain; sequence LRHELPYSLS…HLFLFVKVRE (78 aa).

It belongs to the TRAFAC class TrmE-Era-EngA-EngB-Septin-like GTPase superfamily. Era GTPase family. Monomer.

It localises to the cytoplasm. The protein resides in the cell inner membrane. Its function is as follows. An essential GTPase that binds both GDP and GTP, with rapid nucleotide exchange. Plays a role in 16S rRNA processing and 30S ribosomal subunit biogenesis and possibly also in cell cycle regulation and energy metabolism. This is GTPase Era from Ehrlichia ruminantium (strain Gardel).